The sequence spans 79 residues: EAMZP30-47 protein (79 aa).

Low complexity predominate over residues 1–12; sequence HAASPRGRPQQR. The segment at 1 to 47 is disordered; sequence HAASPRGRPQQRSSRHGAEGPDTTRRGSCCSSSSSCCRPSTPRHPHN. The span at 16 to 25 shows a compositional bias: basic and acidic residues; the sequence is HGAEGPDTTR. The span at 28-37 shows a compositional bias: low complexity; the sequence is SCCSSSSSCC.

The protein localises to the membrane. It localises to the cell membrane. The protein resides in the cytoplasmic vesicle. It is found in the secretory vesicle. Its subcellular location is the rhoptry. In Eimeria acervulina (Coccidian parasite), this protein is EAMZP30-47 protein (CMC17).